The primary structure comprises 167 residues: UPF0114 protein in repA1-repA2 intergenic region (167 aa).

3 helical membrane passes run 15–35, 53–73, and 136–156; these read LMFP…LKFF, LVLI…LVMV, and IILC…MAYI.

This sequence belongs to the UPF0114 family.

It localises to the cell membrane. The chain is UPF0114 protein in repA1-repA2 intergenic region from Buchnera aphidicola subsp. Pterocomma populeum.